The sequence spans 433 residues: 3-phosphoshikimate 1-carboxyvinyltransferase (433 aa).

Positions 22, 23, and 27 each coordinate 3-phosphoshikimate. Lysine 22 is a phosphoenolpyruvate binding site. Phosphoenolpyruvate is bound by residues glycine 95 and arginine 123. Residues serine 167, glutamine 169, aspartate 315, and lysine 342 each coordinate 3-phosphoshikimate. Position 169 (glutamine 169) interacts with phosphoenolpyruvate. Aspartate 315 functions as the Proton acceptor in the catalytic mechanism. Phosphoenolpyruvate is bound by residues arginine 346 and arginine 387.

It belongs to the EPSP synthase family. In terms of assembly, monomer.

The protein localises to the cytoplasm. The enzyme catalyses 3-phosphoshikimate + phosphoenolpyruvate = 5-O-(1-carboxyvinyl)-3-phosphoshikimate + phosphate. Its pathway is metabolic intermediate biosynthesis; chorismate biosynthesis; chorismate from D-erythrose 4-phosphate and phosphoenolpyruvate: step 6/7. Functionally, catalyzes the transfer of the enolpyruvyl moiety of phosphoenolpyruvate (PEP) to the 5-hydroxyl of shikimate-3-phosphate (S3P) to produce enolpyruvyl shikimate-3-phosphate and inorganic phosphate. This chain is 3-phosphoshikimate 1-carboxyvinyltransferase, found in Legionella pneumophila (strain Lens).